The chain runs to 364 residues: DNA replication and repair protein RecF (364 aa).

ATP is bound at residue 30 to 37 (GRNAQGKT).

The protein belongs to the RecF family.

The protein localises to the cytoplasm. The RecF protein is involved in DNA metabolism; it is required for DNA replication and normal SOS inducibility. RecF binds preferentially to single-stranded, linear DNA. It also seems to bind ATP. This chain is DNA replication and repair protein RecF, found in Pelotomaculum thermopropionicum (strain DSM 13744 / JCM 10971 / SI).